The primary structure comprises 651 residues: Carboxypeptidase S1 homolog A (651 aa).

A signal peptide spans 1 to 19 (MHLATGLAVALPFIGAASA). A disulfide bond links cysteine 50 and cysteine 121. 6 N-linked (GlcNAc...) asparagine glycosylation sites follow: asparagine 77, asparagine 125, asparagine 128, asparagine 161, asparagine 184, and asparagine 202. Serine 238 is an active-site residue. N-linked (GlcNAc...) asparagine glycosylation is found at asparagine 260, asparagine 299, asparagine 308, asparagine 347, and asparagine 410. 2 cysteine pairs are disulfide-bonded: cysteine 325/cysteine 361 and cysteine 332/cysteine 354. Residue aspartate 458 is part of the active site. Substrate is bound at residue cysteine 461. 2 N-linked (GlcNAc...) asparagine glycosylation sites follow: asparagine 474 and asparagine 504. Histidine 515 is a catalytic residue. Glutamate 516 provides a ligand contact to substrate. A disordered region spans residues 604-630 (KSPAGKKQGPPPTSTSPPSPTSSSEGS). A compositionally biased stretch (pro residues) spans 612–623 (GPPPTSTSPPSP). The GPI-anchor amidated serine moiety is linked to residue serine 625. The propeptide at 626–651 (SSEGSVKEFSVSVLGVSVLAAITFFL) is removed in mature form.

This sequence belongs to the peptidase S10 family.

The protein resides in the cell membrane. It catalyses the reaction Preferential release of a C-terminal arginine or lysine residue.. Its function is as follows. Extracellular serine carboxypeptidase that contributes to pathogenicity. The protein is Carboxypeptidase S1 homolog A (SCPA) of Arthroderma otae (strain ATCC MYA-4605 / CBS 113480) (Microsporum canis).